Consider the following 168-residue polypeptide: SsrA-binding protein (168 aa).

It belongs to the SmpB family.

It localises to the cytoplasm. Functionally, required for rescue of stalled ribosomes mediated by trans-translation. Binds to transfer-messenger RNA (tmRNA), required for stable association of tmRNA with ribosomes. tmRNA and SmpB together mimic tRNA shape, replacing the anticodon stem-loop with SmpB. tmRNA is encoded by the ssrA gene; the 2 termini fold to resemble tRNA(Ala) and it encodes a 'tag peptide', a short internal open reading frame. During trans-translation Ala-aminoacylated tmRNA acts like a tRNA, entering the A-site of stalled ribosomes, displacing the stalled mRNA. The ribosome then switches to translate the ORF on the tmRNA; the nascent peptide is terminated with the 'tag peptide' encoded by the tmRNA and targeted for degradation. The ribosome is freed to recommence translation, which seems to be the essential function of trans-translation. In Mycobacterium sp. (strain JLS), this protein is SsrA-binding protein.